The chain runs to 1907 residues: Receptor-type tyrosine-protein phosphatase F (1907 aa).

The signal sequence occupies residues 1–29 (MAPEPAPGRTMVPLVPALVMLGLVAGAHG). The Extracellular segment spans residues 30–1263 (DSKPVFIKVP…QQQEEPEMLW (1234 aa)). Ig-like C2-type domains follow at residues 33-123 (PVFI…AKLS), 135-224 (PSID…ANLY), and 232-314 (PRFS…AQVT). An intrachain disulfide couples C54 to C107. Position 68 to 77 (68 to 77 (KKGKKVSSQR)) interacts with heparin. N-linked (GlcNAc...) asparagine glycosylation occurs at N117. A disulfide bond links C156 and C207. N-linked (GlcNAc...) asparagine glycans are attached at residues N250 and N295. The cysteines at positions 253 and 298 are disulfide-linked. Fibronectin type-III domains follow at residues 321–411 (PPID…TGEQ), 416–510 (PPRR…TQQG), 514–604 (QPAD…TAQS), 609–706 (PPQK…TDED), 711–819 (PPRK…TTGA), 820–914 (VPGR…PEDL), 918–1010 (FPQN…TMPV), and 1014–1098 (FAKN…TAPD). The tract at residues 398–417 (GPPSEAVRARTGEQAPSSPP) is disordered. The tract at residues 693–712 (GPESSPVLVRTDEDVPSGPP) is disordered. N721 is a glycosylation site (N-linked (GlcNAc...) asparagine). N-linked (GlcNAc...) asparagine glycosylation is present at N966. Residues 1264–1284 (VTGPVLAVILIILIVIAILLF) form a helical membrane-spanning segment. The Cytoplasmic segment spans residues 1285 to 1907 (KRKRTHSPSS…YLGSFDHYAT (623 aa)). S1305 bears the Phosphoserine mark. Tyrosine-protein phosphatase domains lie at 1352–1607 (FSQE…LLEA) and 1639–1898 (MELE…ALEY). Substrate is bound by residues D1516, 1548-1554 (CSAGVGR), and Q1592. Catalysis depends on C1548, which acts as the Phosphocysteine intermediate. Residue C1839 is the Phosphocysteine intermediate of the active site.

It belongs to the protein-tyrosine phosphatase family. Receptor class 2A subfamily. As to quaternary structure, interacts with GRIP1. Interacts with PPFIA1, PPFIA2 and PPFIA3. Interacts with INSR.

The protein localises to the membrane. The catalysed reaction is O-phospho-L-tyrosyl-[protein] + H2O = L-tyrosyl-[protein] + phosphate. Its function is as follows. Possible cell adhesion receptor. It possesses an intrinsic protein tyrosine phosphatase activity (PTPase) and dephosphorylates EPHA2 regulating its activity. The first PTPase domain has enzymatic activity, while the second one seems to affect the substrate specificity of the first one. In Homo sapiens (Human), this protein is Receptor-type tyrosine-protein phosphatase F (PTPRF).